A 205-amino-acid chain; its full sequence is Methylthioribulose-1-phosphate dehydratase (205 aa).

H94 and H96 together coordinate Zn(2+).

Belongs to the aldolase class II family. MtnB subfamily. Requires Zn(2+) as cofactor.

It carries out the reaction 5-(methylsulfanyl)-D-ribulose 1-phosphate = 5-methylsulfanyl-2,3-dioxopentyl phosphate + H2O. It participates in amino-acid biosynthesis; L-methionine biosynthesis via salvage pathway; L-methionine from S-methyl-5-thio-alpha-D-ribose 1-phosphate: step 2/6. Catalyzes the dehydration of methylthioribulose-1-phosphate (MTRu-1-P) into 2,3-diketo-5-methylthiopentyl-1-phosphate (DK-MTP-1-P). This Pectobacterium atrosepticum (strain SCRI 1043 / ATCC BAA-672) (Erwinia carotovora subsp. atroseptica) protein is Methylthioribulose-1-phosphate dehydratase.